A 141-amino-acid chain; its full sequence is UPF0310 protein SSA_0254 (141 aa).

It belongs to the UPF0310 family.

This Streptococcus sanguinis (strain SK36) protein is UPF0310 protein SSA_0254.